We begin with the raw amino-acid sequence, 495 residues long: Siroheme synthase 2 (495 aa).

A precorrin-2 dehydrogenase /sirohydrochlorin ferrochelatase region spans residues 1–205 (MDHYPIFLNL…GREREAEQAM (205 aa)). Residues 22–23 (ET) and 43–44 (PD) contribute to the NAD(+) site. S130 carries the phosphoserine modification. The interval 220 to 495 (GEVYLVGAGP…HPAPADTEQA (276 aa)) is uroporphyrinogen-III C-methyltransferase. An S-adenosyl-L-methionine-binding site is contributed by P229. D252 functions as the Proton acceptor in the catalytic mechanism. K274 serves as the catalytic Proton donor. Residues 305-307 (GGD), I310, 335-336 (TA), M387, and A416 contribute to the S-adenosyl-L-methionine site. The segment at 471-495 (FPEHGCLRGEPRPTRHPAPADTEQA) is disordered.

This sequence in the N-terminal section; belongs to the precorrin-2 dehydrogenase / sirohydrochlorin ferrochelatase family. It in the C-terminal section; belongs to the precorrin methyltransferase family.

It carries out the reaction uroporphyrinogen III + 2 S-adenosyl-L-methionine = precorrin-2 + 2 S-adenosyl-L-homocysteine + H(+). The enzyme catalyses precorrin-2 + NAD(+) = sirohydrochlorin + NADH + 2 H(+). It catalyses the reaction siroheme + 2 H(+) = sirohydrochlorin + Fe(2+). It functions in the pathway cofactor biosynthesis; adenosylcobalamin biosynthesis; precorrin-2 from uroporphyrinogen III: step 1/1. Its pathway is cofactor biosynthesis; adenosylcobalamin biosynthesis; sirohydrochlorin from precorrin-2: step 1/1. The protein operates within porphyrin-containing compound metabolism; siroheme biosynthesis; precorrin-2 from uroporphyrinogen III: step 1/1. It participates in porphyrin-containing compound metabolism; siroheme biosynthesis; siroheme from sirohydrochlorin: step 1/1. It functions in the pathway porphyrin-containing compound metabolism; siroheme biosynthesis; sirohydrochlorin from precorrin-2: step 1/1. In terms of biological role, multifunctional enzyme that catalyzes the SAM-dependent methylations of uroporphyrinogen III at position C-2 and C-7 to form precorrin-2 via precorrin-1. Then it catalyzes the NAD-dependent ring dehydrogenation of precorrin-2 to yield sirohydrochlorin. Finally, it catalyzes the ferrochelation of sirohydrochlorin to yield siroheme. This chain is Siroheme synthase 2, found in Halorhodospira halophila (strain DSM 244 / SL1) (Ectothiorhodospira halophila (strain DSM 244 / SL1)).